The sequence spans 801 residues: Elongation factor G, mitochondrial (801 aa).

Residues M1–N62 constitute a mitochondrion transit peptide. The 288-residue stretch at S99–S386 folds into the tr-type G domain. GTP contacts are provided by residues A108 to T115, D184 to H188, and N238 to D241.

Belongs to the TRAFAC class translation factor GTPase superfamily. Classic translation factor GTPase family. EF-G/EF-2 subfamily.

Its subcellular location is the mitochondrion. The protein operates within protein biosynthesis; polypeptide chain elongation. Mitochondrial GTPase that catalyzes the GTP-dependent ribosomal translocation step during translation elongation. During this step, the ribosome changes from the pre-translocational (PRE) to the post-translocational (POST) state as the newly formed A-site-bound peptidyl-tRNA and P-site-bound deacylated tRNA move to the P and E sites, respectively. Catalyzes the coordinated movement of the two tRNA molecules, the mRNA and conformational changes in the ribosome. This chain is Elongation factor G, mitochondrial (mef1), found in Aspergillus niger (strain ATCC MYA-4892 / CBS 513.88 / FGSC A1513).